A 237-amino-acid chain; its full sequence is MDQSEIVKLNKIKAKSAWLKKGAARSSAISCGLGIGIGFGIALFIFSQTLRGFGIYLAGLCTFHMWEYIWVTMYHPDKLSSKSFLLNHSPQFNMALLISFIEFWIEWYFFPSLKTFSLWWVGAICMVFGQIVRSVAMDTAGSNFTHLVQEEKRDDHVLVTNGIYQYMRHPSYFGWFVWSVSTQVILMNPISIIGFGWASWSFFSQRIENEEDYLIQFFGKSYKDYKKSVWSGIPGIH.

The next 4 helical transmembrane spans lie at 26–46 (SSAI…LFIF), 53–73 (FGIY…WVTM), 92–112 (FNMA…FFPS), and 116–136 (FSLW…RSVA). Residues Gln149, 156-159 (HVLV), Tyr164, and 169-172 (HPSY) contribute to the S-adenosyl-L-methionine site. The chain crosses the membrane as a helical span at residues 184–204 (VILMNPISIIGFGWASWSFFS). A substrate-binding site is contributed by Arg206. Glu210 lines the S-adenosyl-L-methionine pocket.

The protein belongs to the class VI-like SAM-binding methyltransferase superfamily. Isoprenylcysteine carboxyl methyltransferase family.

It localises to the endoplasmic reticulum membrane. It catalyses the reaction [protein]-C-terminal S-[(2E,6E)-farnesyl]-L-cysteine + S-adenosyl-L-methionine = [protein]-C-terminal S-[(2E,6E)-farnesyl]-L-cysteine methyl ester + S-adenosyl-L-homocysteine. Methylates the C-terminal cysteine residues of small GTPases and the heterotrimeric G protein gamma subunit in response to cAMP. The methylation is required for intercellular signaling and regulation of cAMP waves propagation. It also seems to induce the activity of car1, a G protein-coupled receptor which senses extracellular cAMP during the aggregation phase of development. The protein is Protein-S-isoprenylcysteine O-methyltransferase (icmt-1) of Dictyostelium discoideum (Social amoeba).